The primary structure comprises 205 residues: StAR-related lipid transfer protein 4 (205 aa).

The 205-residue stretch at 1–205 (MEGLSDVASF…NFYGDLRKAL (205 aa)) folds into the START domain.

It catalyses the reaction cholesterol(in) = cholesterol(out). In terms of biological role, involved in the intracellular transport of cholesterol. Binds cholesterol or other sterols. This Homo sapiens (Human) protein is StAR-related lipid transfer protein 4 (STARD4).